A 318-amino-acid polypeptide reads, in one-letter code: Pheromone-regulated membrane protein 5 (318 aa).

Residues 75-98 (GTVFIVVGGIAGVIFLAILLWWVI) traverse the membrane as a helical segment. At S129 the chain carries Phosphoserine. A compositionally biased stretch (low complexity) spans 238–247 (TISSSSASSL). The segment at 238–318 (TISSSSASSL…HMLEGKEQDE (81 aa)) is disordered. Over residues 250 to 261 (GNEKEVGEDIRK) the composition is skewed to basic and acidic residues. Residues 276 to 285 (SPESDGSVNR) are compositionally biased toward polar residues. A phosphoserine mark is found at S279, S282, and S288. The segment covering 309-318 (HMLEGKEQDE) has biased composition (basic and acidic residues). K314 participates in a covalent cross-link: Glycyl lysine isopeptide (Lys-Gly) (interchain with G-Cter in ubiquitin).

It belongs to the PRM5 family.

It localises to the membrane. The sequence is that of Pheromone-regulated membrane protein 5 (PRM5) from Saccharomyces cerevisiae (strain ATCC 204508 / S288c) (Baker's yeast).